Consider the following 427-residue polypeptide: Peptidase B (427 aa).

Mn(2+) is bound by residues K195 and D200. The active site involves K207. Positions 218, 277, and 279 each coordinate Mn(2+). The active site involves R281.

Belongs to the peptidase M17 family. Homohexamer. The cofactor is Mn(2+).

The protein localises to the cytoplasm. It carries out the reaction Release of an N-terminal amino acid, Xaa, from a peptide or arylamide. Xaa is preferably Glu or Asp but may be other amino acids, including Leu, Met, His, Cys and Gln.. In terms of biological role, probably plays an important role in intracellular peptide degradation. The polypeptide is Peptidase B (Salmonella agona (strain SL483)).